The primary structure comprises 246 residues: Ribonuclease 3 (246 aa).

One can recognise an RNase III domain in the interval 16-144 (LLEFQKQAGL…VIGAYYIDSG (129 aa)). Residue Glu-57 coordinates Mg(2+). The active site involves Asp-61. Residues Asp-130 and Glu-133 each coordinate Mg(2+). Glu-133 is a catalytic residue. Residues 171–240 (DYKSLLQELV…AKVAYENLCS (70 aa)) enclose the DRBM domain.

The protein belongs to the ribonuclease III family. Homodimer. Mg(2+) is required as a cofactor.

The protein localises to the cytoplasm. It catalyses the reaction Endonucleolytic cleavage to 5'-phosphomonoester.. Its function is as follows. Digests double-stranded RNA. Involved in the processing of primary rRNA transcript to yield the immediate precursors to the large and small rRNAs (23S and 16S). Processes some mRNAs, and tRNAs when they are encoded in the rRNA operon. Processes pre-crRNA and tracrRNA of type II CRISPR loci if present in the organism. The sequence is that of Ribonuclease 3 from Treponema denticola (strain ATCC 35405 / DSM 14222 / CIP 103919 / JCM 8153 / KCTC 15104).